The chain runs to 670 residues: ATP-dependent RNA helicase DDX18 (670 aa).

Polar residues-rich tracts occupy residues 31 to 42 and 83 to 105; these read SNLTLSETQNGD and VTKS…SSNS. Positions 31–169 are disordered; that stretch reads SNLTLSETQN…ESEVPSLPLG (139 aa). Residues 117 to 154 show a composition bias toward basic and acidic residues; the sequence is MVNDAEPDTKKAKTENKGKSEEESAETTKETENNVEKP. The short motif at 179–207 is the Q motif element; that stretch reads FASLCNLVNENTLKAIKEMGFTNMTEIQH. In terms of domain architecture, Helicase ATP-binding spans 210-385; it reads IRPLLEGRDL…RISLKKEPLY (176 aa). ATP is bound at residue 223–230; it reads AKTGSGKT. The DEAD box motif lies at 333 to 336; sequence DEAD. Residues 399 to 569 form the Helicase C-terminal domain; that stretch reads GLEQGYVVCP…DIQSQLEKLI (171 aa).

It belongs to the DEAD box helicase family. DDX18/HAS1 subfamily. Interacts with NOL8; the interaction is RNA-dependent. Interacts with PRC2 complex components EZH2, SUZ2 and JARID2; these interactions prevent deposition of the repressive H3K27me3 mark onto rDNA in pluripotent cells.

It localises to the nucleus. The protein localises to the nucleolus. Its subcellular location is the chromosome. The catalysed reaction is ATP + H2O = ADP + phosphate + H(+). In terms of biological role, ATP-dependent RNA helicase that plays a role in the regulation of R-loop homeostasis in both endogenous R-loop-prone regions and at sites of DNA damage. At endogenous loci such as actively transcribed genes, may act as a helicase to resolve the formation of R-loop during transcription and prevent the interference of R-loop with DNA-replication machinery. Also participates in the removal of DNA-lesion-associated R-loop. Plays an essential role for establishing pluripotency during embryogenesis and for pluripotency maintenance in embryonic stem cells. Mechanistically, prevents the polycomb repressive complex 2 (PRC2) from accessing rDNA loci and protects the active chromatin status in nucleolus. The chain is ATP-dependent RNA helicase DDX18 (DDX18) from Homo sapiens (Human).